Here is a 287-residue protein sequence, read N- to C-terminus: 4-hydroxybenzoate octaprenyltransferase (287 aa).

The next 5 membrane-spanning stretches (helical) occupy residues 20-38 (IGTL…FAAG), 95-115 (IVFL…NPLV), 211-231 (IIAA…LIAE), 235-255 (IYGG…KLIF), and 266-286 (FLNN…DYLV).

Belongs to the UbiA prenyltransferase family. Mg(2+) serves as cofactor.

It is found in the cell inner membrane. It catalyses the reaction all-trans-octaprenyl diphosphate + 4-hydroxybenzoate = 4-hydroxy-3-(all-trans-octaprenyl)benzoate + diphosphate. It functions in the pathway cofactor biosynthesis; ubiquinone biosynthesis. Catalyzes the prenylation of para-hydroxybenzoate (PHB) with an all-trans polyprenyl group. Mediates the second step in the final reaction sequence of ubiquinone-8 (UQ-8) biosynthesis, which is the condensation of the polyisoprenoid side chain with PHB, generating the first membrane-bound Q intermediate 3-octaprenyl-4-hydroxybenzoate. This chain is 4-hydroxybenzoate octaprenyltransferase, found in Shewanella piezotolerans (strain WP3 / JCM 13877).